Reading from the N-terminus, the 668-residue chain is Transketolase 1 (668 aa).

Substrate is bound at residue histidine 26. Thiamine diphosphate-binding positions include histidine 66 and 114-116 (GPL). Aspartate 155 serves as a coordination point for Mg(2+). Thiamine diphosphate is bound by residues glycine 156 and asparagine 185. The Mg(2+) site is built by asparagine 185 and isoleucine 187. Positions 261, 358, and 385 each coordinate substrate. Histidine 261 lines the thiamine diphosphate pocket. Residue glutamate 413 is the Proton donor of the active site. Phenylalanine 439 contributes to the thiamine diphosphate binding site. Histidine 463, aspartate 471, and arginine 522 together coordinate substrate.

Belongs to the transketolase family. Homodimer. Mg(2+) is required as a cofactor. The cofactor is Ca(2+). Mn(2+) serves as cofactor. Requires Co(2+) as cofactor. It depends on thiamine diphosphate as a cofactor.

The catalysed reaction is D-sedoheptulose 7-phosphate + D-glyceraldehyde 3-phosphate = aldehydo-D-ribose 5-phosphate + D-xylulose 5-phosphate. In terms of biological role, catalyzes the transfer of a two-carbon ketol group from a ketose donor to an aldose acceptor, via a covalent intermediate with the cofactor thiamine pyrophosphate. This Pasteurella multocida (strain Pm70) protein is Transketolase 1 (tktA).